The chain runs to 86 residues: Small ribosomal subunit protein uS17 (86 aa).

The protein belongs to the universal ribosomal protein uS17 family. Part of the 30S ribosomal subunit.

One of the primary rRNA binding proteins, it binds specifically to the 5'-end of 16S ribosomal RNA. This is Small ribosomal subunit protein uS17 from Marinomonas sp. (strain MWYL1).